We begin with the raw amino-acid sequence, 63 residues long: Serine protease inhibitor 3 (63 aa).

The N-terminal stretch at 1 to 23 (MAKLLAVFLVLLIAALVCEQALA) is a signal peptide. 3 disulfides stabilise this stretch: cysteine 24/cysteine 39, cysteine 34/cysteine 52, and cysteine 37/cysteine 47. Residues 24 to 55 (CTPGSRKYDGCNWCTCSSGGAWICTLKYCPPS) enclose the Pacifastin domain.

This sequence belongs to the protease inhibitor I19 family. Expressed in hemolymph, ovaries, testes and fat body of adults but are absent in the gut. Also present in larval hemolymph and fat body.

The protein localises to the secreted. In vitro, active against alpha-chymotrypsin. This chain is Serine protease inhibitor 3, found in Schistocerca gregaria (Desert locust).